The chain runs to 428 residues: Pyruvate dehydrogenase E1 component subunit alpha-3, chloroplastic (428 aa).

The transit peptide at 1–61 (MATAFAPTKL…NATRRSPVVS (61 aa)) directs the protein to the chloroplast. His-115, Tyr-141, Arg-142, Ala-190, Ile-192, Asp-227, Gly-228, and Asn-256 together coordinate pyruvate. Thiamine diphosphate contacts are provided by Tyr-141, Arg-142, Ala-190, Ile-192, Asp-227, Gly-228, Asn-256, and His-325. Asp-227 contacts Mg(2+). Residue Asn-256 participates in Mg(2+) binding.

As to quaternary structure, tetramer of 2 alpha and 2 beta subunits. It depends on thiamine diphosphate as a cofactor. Requires Mg(2+) as cofactor.

The protein resides in the plastid. Its subcellular location is the chloroplast. It catalyses the reaction N(6)-[(R)-lipoyl]-L-lysyl-[protein] + pyruvate + H(+) = N(6)-[(R)-S(8)-acetyldihydrolipoyl]-L-lysyl-[protein] + CO2. Functionally, the pyruvate dehydrogenase complex catalyzes the overall conversion of pyruvate to acetyl-CoA and CO(2). It contains multiple copies of three enzymatic components: pyruvate dehydrogenase (E1), dihydrolipoamide acetyltransferase (E2) and lipoamide dehydrogenase (E3). This chain is Pyruvate dehydrogenase E1 component subunit alpha-3, chloroplastic (PDH-E1 ALPHA), found in Arabidopsis thaliana (Mouse-ear cress).